A 561-amino-acid polypeptide reads, in one-letter code: 7-keto 8-aminopelargonic acid transporter (561 aa).

Topologically, residues 1 to 49 are cytoplasmic; sequence MNRVGAVFLFVYERNFFLSIVPDRHRTEIRMSSSERSEVKFDKHFNWWS. A helical transmembrane segment spans residues 50–70; it reads LLGIAFSLSCSWVGISASMAV. Topologically, residues 71 to 77 are extracellular; it reads GIASGGP. A helical transmembrane segment spans residues 78–98; the sequence is LLIIYGLIIAAFFSLMCGISL. Residues 99 to 160 lie on the Cytoplasmic side of the membrane; the sequence is GDFAAILPNS…NVEVSSKFQK (62 aa). A helical membrane pass occupies residues 161 to 181; sequence VSSMVVGLLNYFGAIFTTASI. Over 182-204 the chain is Extracellular; sequence CSSLSMSCIGIHKLLHPDYELKH. The chain crosses the membrane as a helical span at residues 205–225; the sequence is WHVFVGYECINAVLTLFNIYS. The Cytoplasmic segment spans residues 226–230; that stretch reads TPLPY. Residues 231–251 form a helical membrane-spanning segment; that stretch reads ISQFGLYTSLLSFAMTFIICI. Topologically, residues 252–281 are extracellular; the sequence is VSRSDNTVDPWPKASNIFGSFDNQTGWNSS. The helical transmembrane segment at 282-302 threads the bilayer; it reads GMAFVVGLVNPIWAFVGIDSA. Topologically, residues 303–321 are cytoplasmic; the sequence is THMIDEVGYSKSRFLVPKV. Residues 322 to 342 traverse the membrane as a helical segment; the sequence is IITTIIVGFVTSFIYCVGLFF. Residues 343–369 are Extracellular-facing; sequence CITDQTAVVESILPIVEIFYQATGNRN. A helical transmembrane segment spans residues 370 to 390; it reads LSVFLQCMCITTGFVSGIASG. The Cytoplasmic segment spans residues 391–439; sequence TWQSRILQSFGKSYAPFYKEGSLGNKSLKKLAVLTPGFKSPLYAHFLSQ. A helical transmembrane segment spans residues 440-460; that stretch reads ICVTIIGCIFMGSSTAFNAII. Position 461 (T461) is a topological domain, extracellular. A helical membrane pass occupies residues 462-482; it reads ACITLLLMSYAVPSFIFLFVI. Residues 483–507 lie on the Cytoplasmic side of the membrane; sequence KKEKFIHRIESDVNCVSRPNRRRMS. The chain crosses the membrane as a helical span at residues 508-528; it reads MIPHIICILWTLFCLVFLSFP. At 529-540 the chain is on the extracellular side; the sequence is YTLPVTAGNMNY. A helical membrane pass occupies residues 541–560; that stretch reads TSVVYAVVFCIISIVVFPTC. A topological domain (cytoplasmic) is located at residue I561.

The protein belongs to the amino acid-polyamine-organocation (APC) superfamily.

The protein localises to the membrane. Transport into the cell of 7-keto 8-aminopelargonic acid. The sequence is that of 7-keto 8-aminopelargonic acid transporter (BIO5) from Saccharomyces cerevisiae (strain ATCC 204508 / S288c) (Baker's yeast).